The following is a 520-amino-acid chain: Amphoterin-induced protein 2 (520 aa).

A signal peptide spans Met1–Ser37. Residues Gly38–Arg67 enclose the LRRNT domain. At Gly38–Thr398 the chain is on the extracellular side. Intrachain disulfides connect Cys40/Cys46 and Cys44/Cys53. Asn57 is a glycosylation site (N-linked (GlcNAc...) asparagine). 6 LRR repeats span residues Leu68–Val89, Lys93–Thr114, Asn117–Glu138, Val141–Gly162, His165–Gly186, and Asp192–Leu213. A glycan (N-linked (GlcNAc...) asparagine) is linked at Asn103. The LRRCT domain occupies Asn227–His283. Disulfide bonds link Cys231–Cys259 and Cys233–Cys281. N-linked (GlcNAc...) asparagine glycosylation is found at Asn280, Asn287, Asn344, Asn372, Asn380, Asn383, and Asn387. Residues Gly288 to Met378 form the Ig-like C2-type domain. Cys309 and Cys362 are joined by a disulfide. Residues Ala399–Leu419 form a helical membrane-spanning segment. Topologically, residues Thr420 to Thr520 are cytoplasmic. 2 disordered regions span residues Gln437–Arg458 and Ser498–Thr520.

This sequence belongs to the immunoglobulin superfamily. AMIGO family. Binds itself as well as AMIGO1 and AMIGO3. Highest levels in the lung. High levels in cerebellar granule neurons and Purkinje cells. Also in pyramidal cells between CA1 and CA3 regions of the hippocampus and granule cells of the dentate gyrus.

The protein localises to the cell membrane. The protein resides in the nucleus. In terms of biological role, required for depolarization-dependent survival of cultured cerebellar granule neurons. May mediate homophilic as well as heterophilic cell-cell interaction with AMIGO1 or AMIGO3. May contribute to signal transduction through its intracellular domain. The polypeptide is Amphoterin-induced protein 2 (Rattus norvegicus (Rat)).